The primary structure comprises 549 residues: Oxygen-dependent choline dehydrogenase (549 aa).

4–33 is a binding site for FAD; it reads DFVIIGSGSAGSAMAYRLSEDGRYSVIVIE. Catalysis depends on His465, which acts as the Proton acceptor.

This sequence belongs to the GMC oxidoreductase family. It depends on FAD as a cofactor.

The enzyme catalyses choline + A = betaine aldehyde + AH2. The catalysed reaction is betaine aldehyde + NAD(+) + H2O = glycine betaine + NADH + 2 H(+). It functions in the pathway amine and polyamine biosynthesis; betaine biosynthesis via choline pathway; betaine aldehyde from choline (cytochrome c reductase route): step 1/1. Its function is as follows. Involved in the biosynthesis of the osmoprotectant glycine betaine. Catalyzes the oxidation of choline to betaine aldehyde and betaine aldehyde to glycine betaine at the same rate. This Brucella anthropi (strain ATCC 49188 / DSM 6882 / CCUG 24695 / JCM 21032 / LMG 3331 / NBRC 15819 / NCTC 12168 / Alc 37) (Ochrobactrum anthropi) protein is Oxygen-dependent choline dehydrogenase.